The sequence spans 550 residues: Hydroxylamine reductase (550 aa).

4 residues coordinate [2Fe-2S] cluster: Cys-4, Cys-7, Cys-19, and Cys-26. 8 residues coordinate hybrid [4Fe-2O-2S] cluster: His-249, Glu-273, Cys-317, Cys-405, Cys-433, Cys-458, Glu-492, and Lys-494. Cys-405 bears the Cysteine persulfide mark.

It belongs to the HCP family. It depends on [2Fe-2S] cluster as a cofactor. Requires hybrid [4Fe-2O-2S] cluster as cofactor.

Its subcellular location is the cytoplasm. The enzyme catalyses A + NH4(+) + H2O = hydroxylamine + AH2 + H(+). Functionally, catalyzes the reduction of hydroxylamine to form NH(3) and H(2)O. This is Hydroxylamine reductase from Aeromonas salmonicida (strain A449).